The primary structure comprises 305 residues: Coiled-coil domain-containing protein 69-A (305 aa).

Gly2 is lipidated: N-myristoyl glycine. Positions Leu13 to Thr38 are disordered. The segment covering Gly25–Thr38 has biased composition (polar residues). Positions Asn42–Arg281 form a coiled coil.

It belongs to the CCDC69 family.

Its subcellular location is the cytoplasm. The protein localises to the cytoskeleton. The protein resides in the spindle. It is found in the midbody. Its function is as follows. May act as a scaffold to regulate the recruitment and assembly of spindle midzone components. The sequence is that of Coiled-coil domain-containing protein 69-A (ccdc69-a) from Xenopus laevis (African clawed frog).